We begin with the raw amino-acid sequence, 486 residues long: Aspartyl/glutamyl-tRNA(Asn/Gln) amidotransferase subunit B (486 aa).

The protein belongs to the GatB/GatE family. GatB subfamily. Heterotrimer of A, B and C subunits.

It catalyses the reaction L-glutamyl-tRNA(Gln) + L-glutamine + ATP + H2O = L-glutaminyl-tRNA(Gln) + L-glutamate + ADP + phosphate + H(+). It carries out the reaction L-aspartyl-tRNA(Asn) + L-glutamine + ATP + H2O = L-asparaginyl-tRNA(Asn) + L-glutamate + ADP + phosphate + 2 H(+). Functionally, allows the formation of correctly charged Asn-tRNA(Asn) or Gln-tRNA(Gln) through the transamidation of misacylated Asp-tRNA(Asn) or Glu-tRNA(Gln) in organisms which lack either or both of asparaginyl-tRNA or glutaminyl-tRNA synthetases. The reaction takes place in the presence of glutamine and ATP through an activated phospho-Asp-tRNA(Asn) or phospho-Glu-tRNA(Gln). The protein is Aspartyl/glutamyl-tRNA(Asn/Gln) amidotransferase subunit B of Leptospira borgpetersenii serovar Hardjo-bovis (strain L550).